Reading from the N-terminus, the 117-residue chain is Large ribosomal subunit protein uL18 (117 aa).

It belongs to the universal ribosomal protein uL18 family. As to quaternary structure, part of the 50S ribosomal subunit; part of the 5S rRNA/L5/L18/L25 subcomplex. Contacts the 5S and 23S rRNAs.

Its function is as follows. This is one of the proteins that bind and probably mediate the attachment of the 5S RNA into the large ribosomal subunit, where it forms part of the central protuberance. The chain is Large ribosomal subunit protein uL18 from Sodalis glossinidius (strain morsitans).